Reading from the N-terminus, the 93-residue chain is Cobalt transport protein CbiN (93 aa).

Helical transmembrane passes span 5–25 (LMLL…NHGG) and 63–83 (LLFT…LGYC).

It belongs to the CbiN family. In terms of assembly, forms an energy-coupling factor (ECF) transporter complex composed of an ATP-binding protein (A component, CbiO), a transmembrane protein (T component, CbiQ) and 2 possible substrate-capture proteins (S components, CbiM and CbiN) of unknown stoichimetry.

The protein localises to the cell inner membrane. It functions in the pathway cofactor biosynthesis; adenosylcobalamin biosynthesis. In terms of biological role, part of the energy-coupling factor (ECF) transporter complex CbiMNOQ involved in cobalt import. The polypeptide is Cobalt transport protein CbiN (Salmonella choleraesuis (strain SC-B67)).